Reading from the N-terminus, the 330-residue chain is Aspartate--ammonia ligase (330 aa).

It belongs to the class-II aminoacyl-tRNA synthetase family. AsnA subfamily.

It is found in the cytoplasm. It carries out the reaction L-aspartate + NH4(+) + ATP = L-asparagine + AMP + diphosphate + H(+). It participates in amino-acid biosynthesis; L-asparagine biosynthesis; L-asparagine from L-aspartate (ammonia route): step 1/1. The protein is Aspartate--ammonia ligase of Haemophilus influenzae (strain PittGG).